Consider the following 3912-residue polypeptide: Chondramide synthase cmdD (3912 aa).

A Carrier 1 domain is found at 1411–1485 (APRNAREETL…ALAEVASASK (75 aa)). S1446 carries the post-translational modification O-(pantetheine 4'-phosphoryl)serine. Residues 1995-2029 (ADEDDEEDDELDEEFDAEVDEEDEDEEEEEDDDGE) are compositionally biased toward acidic residues. A disordered region spans residues 1995 to 2030 (ADEDDEEDDELDEEFDAEVDEEDEDEEEEEDDDGEN). The 76-residue stretch at 2989 to 3064 (APRTATEETL…VLARVIDEAL (76 aa)) folds into the Carrier 2 domain. Position 3024 is an O-(pantetheine 4'-phosphoryl)serine (S3024).

This sequence belongs to the ATP-dependent AMP-binding enzyme family. Pantetheine 4'-phosphate is required as a cofactor.

Involved in the synthesis of chondramides. Activates R-beta-tyrosine and probably phenylalanine. The sequence is that of Chondramide synthase cmdD from Chondromyces crocatus.